The primary structure comprises 494 residues: MHTQPQSYQAPEQTHMRIENRRIEAGKGGTNLLLIIESRVDTLSINLPTLYSLLFTTNITILMSAPQHRQLRRAAHITKIASIDLCSLEEEDHEDLVLEESGHHPSDIQNEKPNRPPYSTLIRKRSGKVFRFVRPKLADLWHSRYHEASFDLGRRLGIGRRTQSCCEDVCDEEVSVETMAITALPMDVWLKERLKKWVQLSGHEGSIVPATPHTLYKKQCANCGEGRAYKNISKDPALDGFTPKYYDELEKNEEHFIEIEDLLQQFHDPTKTAIMDIKIGTRTFLESEVSNTKKRADLYEKMVAIDNDEPTEEERKCGAITKLRYMQFRERESSTAQLGFRIEAAKRLEGALEKNFKKVRTVEDVTTTFMDFFGTQRSRVRQQLIERLKSMRKAIEHSSFFNSHEVVGSSILIVFDTEKVGCWMIDFAKSSPVPNGRTLNHRTTWIPGNNEDGYLIGIDNLVKILEELPEYGEHPDDQLMVTEEVIARMKNTKS.

Residues S206, K218, 260-262 (EDL), and D276 each bind ATP. Residues K278 and 322-329 (KLRYMQFR) contribute to the substrate site. ATP contacts are provided by K346 and D426. K429 lines the substrate pocket.

The protein belongs to the inositol phosphokinase (IPK) family. As to expression, expressed in spermatheca.

It carries out the reaction 1D-myo-inositol 1,4,5-trisphosphate + ATP = 1D-myo-inositol 1,3,4,5-tetrakisphosphate + ADP + H(+). Unlike mammalian IP3K, may not be regulated by calmodulin. In terms of biological role, probably by regulating inositol 1,4,5-trisphosphate levels, negatively regulates posterior body wall muscle contractions required for defecation and let-23 signaling pathway that controls spermathecal dilation and ovulation. May also regulate ovulation downstream of actin cross-linker fln-1. The polypeptide is Inositol-trisphosphate 3-kinase homolog (Caenorhabditis elegans).